Here is a 257-residue protein sequence, read N- to C-terminus: Outer dense fiber protein 4 (257 aa).

Residues 1–41 (MDAEYSGNEFPRSEGERDQHQRPGKERKSGEAGWGTGELGQ) are disordered. Residues 11–30 (PRSEGERDQHQRPGKERKSG) show a composition bias toward basic and acidic residues. Residue Ser-64 is modified to Phosphoserine. The next 3 helical transmembrane spans lie at 80–100 (AQVLASELSLVAFILLLVVAF), 152–172 (VTFIFSTLMLFPINIWIFELE), and 179–199 (IGWSYFIGWLVLILYFTCAIL).

As to expression, expressed in testis and sperm; especially localized to sperm tail (at protein level).

Its subcellular location is the membrane. Its function is as follows. Component of the outer dense fibers (ODF) of spermatozoa which could be involved in sperm tail structure, sperm movement and general organization of cellular cytoskeleton. The polypeptide is Outer dense fiber protein 4 (ODF4) (Homo sapiens (Human)).